Here is a 124-residue protein sequence, read N- to C-terminus: MSRGGAAVAKGKKKGVSFTIDCSKPVDDKIMEIASLEKFLQERIKVGGKAGALGDSVTITREKSKITVTADGQFSKRYLKYLTKKYLKKHNVRDWLRVIAANKDRNLYELRYFNIAENEGEEED.

The protein belongs to the eukaryotic ribosomal protein eL22 family.

In Arabidopsis thaliana (Mouse-ear cress), this protein is Large ribosomal subunit protein eL22z (RPL22B).